The sequence spans 784 residues: Toll-like receptor 2 (784 aa).

An N-terminal signal peptide occupies residues 1–20 (MPHTLWMVWVLGVIISLSKE). Residues 21-587 (ESSNQASLSC…VRLSVSECHR (567 aa)) are Extracellular-facing. Cys30 and Cys36 are disulfide-bonded. 19 LRR repeats span residues 54 to 77 (VKSL…RCVN), 78 to 101 (LQAL…SLGS), 102 to 125 (LEHL…PLSS), 126 to 150 (LTFL…HLTK), 151 to 175 (LQIL…GLTF), 176 to 199 (LEEL…SIQN), 200 to 223 (VSHL…VTSS), 224 to 250 (VECL…TNSL), 251 to 278 (IKKF…QISG), 279 to 308 (LLEL…DPGK), 309 to 337 (VETL…LTER), 338 to 361 (VKRI…HLKS), 362 to 388 (LEYL…AWPS), 389 to 414 (LQTL…TLKN), 415 to 437 (LTNV…WPEK), 438 to 457 (MKYL…CIPK), 458 to 478 (TLEI…NLPQ), 479 to 500 (LKEL…LLPM), and 501 to 524 (LLVL…SFHT). Residue Asn114 is glycosylated (N-linked (GlcNAc...) asparagine). Asn199 is a glycosylation site (N-linked (GlcNAc...) asparagine). Cysteines 353 and 382 form a disulfide. N-linked (GlcNAc...) asparagine glycosylation is present at Asn414. Residues Cys432 and Cys454 are joined by a disulfide bond. The N-linked (GlcNAc...) asparagine glycan is linked to Asn442. In terms of domain architecture, LRRCT spans 525 to 579 (LKTLEAGGNNFICSCEFLSFTQEQQALAKVLIDWPANYLCDSPSHVRGQQVQDVR). The chain crosses the membrane as a helical span at residues 588–608 (TALVSGMCCALFLLILLTGVL). The Cytoplasmic portion of the chain corresponds to 609–784 (CHRFHGLWYM…WVNLRAAIKS (176 aa)). Positions 639–782 (ICYDAFVSYS…GFWVNLRAAI (144 aa)) constitute a TIR domain. Residue Lys754 forms a Glycyl lysine isopeptide (Lys-Gly) (interchain with G-Cter in ubiquitin) linkage. Residues 761 to 778 (YLEWPMDEAQREGFWVNL) carry the ATG16L1-binding motif motif.

The protein belongs to the Toll-like receptor family. Interacts with LY96, TLR1 and TLR6 (via extracellular domain). TLR2 seems to exist in heterodimers with either TLR1 or TLR6 before stimulation by the ligand. The heterodimers form bigger oligomers in response to their corresponding ligands as well as further heterotypic associations with other receptors such as CD14 and/or CD36. Binds MYD88 (via TIR domain). Interacts with TICAM1. Interacts with CNPY3. Interacts with ATG16L1. Interacts with PPP1R11. Interacts with TICAM2. Interacts with TIRAP. Post-translationally, ubiquitinated at Lys-754 by PPP1R11, leading to its degradation. Deubiquitinated by USP2. In terms of processing, glycosylation of Asn-442 is critical for secretion of the N-terminal ectodomain of TLR2.

It localises to the membrane. The protein localises to the cytoplasmic vesicle. The protein resides in the phagosome membrane. Its subcellular location is the membrane raft. Cooperates with LY96 to mediate the innate immune response to bacterial lipoproteins and other microbial cell wall components. Cooperates with TLR1 or TLR6 to mediate the innate immune response to bacterial lipoproteins or lipopeptides. Acts via MYD88 and TRAF6, leading to NF-kappa-B activation, cytokine secretion and the inflammatory response. May also promote apoptosis in response to lipoproteins. Forms activation clusters composed of several receptors depending on the ligand, these clusters trigger signaling from the cell surface and subsequently are targeted to the Golgi in a lipid-raft dependent pathway. Forms the cluster TLR2:TLR6:CD14:CD36 in response to diacylated lipopeptides and TLR2:TLR1:CD14 in response to triacylated lipopeptides. The chain is Toll-like receptor 2 (TLR2) from Gorilla gorilla gorilla (Western lowland gorilla).